The primary structure comprises 70 residues: Large ribosomal subunit protein uL29 (70 aa).

This sequence belongs to the universal ribosomal protein uL29 family.

The protein is Large ribosomal subunit protein uL29 of Clostridium botulinum (strain Alaska E43 / Type E3).